Here is a 93-residue protein sequence, read N- to C-terminus: Small ribosomal subunit protein bS20 (93 aa).

It belongs to the bacterial ribosomal protein bS20 family.

In terms of biological role, binds directly to 16S ribosomal RNA. The chain is Small ribosomal subunit protein bS20 from Dictyoglomus thermophilum (strain ATCC 35947 / DSM 3960 / H-6-12).